The primary structure comprises 371 residues: uncharacterized protein (371 aa).

In terms of domain architecture, 4Fe-4S ferredoxin-type spans 110–140; the sequence is MEKFIDFDRCNKCGECARKICKAKWTPLNYL.

This is an uncharacterized protein from Methanocaldococcus jannaschii (strain ATCC 43067 / DSM 2661 / JAL-1 / JCM 10045 / NBRC 100440) (Methanococcus jannaschii).